A 390-amino-acid chain; its full sequence is L-seryl-tRNA(Sec) selenium transferase (390 aa).

At K225 the chain carries N6-(pyridoxal phosphate)lysine.

It belongs to the SelA family. It depends on pyridoxal 5'-phosphate as a cofactor.

It localises to the cytoplasm. The enzyme catalyses L-seryl-tRNA(Sec) + selenophosphate + H(+) = L-selenocysteinyl-tRNA(Sec) + phosphate. The protein operates within aminoacyl-tRNA biosynthesis; selenocysteinyl-tRNA(Sec) biosynthesis; selenocysteinyl-tRNA(Sec) from L-seryl-tRNA(Sec) (bacterial route): step 1/1. Converts seryl-tRNA(Sec) to selenocysteinyl-tRNA(Sec) required for selenoprotein biosynthesis. The chain is L-seryl-tRNA(Sec) selenium transferase from Helicobacter pylori (strain P12).